We begin with the raw amino-acid sequence, 65 residues long: Putative antitoxin VapB7 (65 aa).

Belongs to the UPF0165 family.

Functionally, possibly the antitoxin component of a type II toxin-antitoxin (TA) system. Its cognate toxin is VapC7 (Potential). The sequence is that of Putative antitoxin VapB7 (vapB7) from Archaeoglobus fulgidus (strain ATCC 49558 / DSM 4304 / JCM 9628 / NBRC 100126 / VC-16).